The chain runs to 451 residues: Arginine biosynthesis bifunctional protein ArgJ, mitochondrial (451 aa).

Substrate contacts are provided by T180, K209, T220, E307, N446, and T451. Catalysis depends on T220, which acts as the Nucleophile.

The protein belongs to the ArgJ family. As to quaternary structure, heterodimer of an alpha and a beta chain. Post-translationally, the alpha and beta chains are autoproteolytically processed from a single precursor protein within the mitochondrion.

The protein resides in the mitochondrion matrix. It carries out the reaction N(2)-acetyl-L-ornithine + L-glutamate = N-acetyl-L-glutamate + L-ornithine. The catalysed reaction is L-glutamate + acetyl-CoA = N-acetyl-L-glutamate + CoA + H(+). Its pathway is amino-acid biosynthesis; L-arginine biosynthesis; L-ornithine and N-acetyl-L-glutamate from L-glutamate and N(2)-acetyl-L-ornithine (cyclic): step 1/1. It functions in the pathway amino-acid biosynthesis; L-arginine biosynthesis; N(2)-acetyl-L-ornithine from L-glutamate: step 1/4. In terms of biological role, catalyzes two activities which are involved in the cyclic version of arginine biosynthesis: the synthesis of acetylglutamate from glutamate and acetyl-CoA, and of ornithine by transacetylation between acetylornithine and glutamate. The sequence is that of Arginine biosynthesis bifunctional protein ArgJ, mitochondrial from Fusarium vanettenii (strain ATCC MYA-4622 / CBS 123669 / FGSC 9596 / NRRL 45880 / 77-13-4) (Fusarium solani subsp. pisi).